The chain runs to 716 residues: Polycystin-2 (716 aa).

Basic and acidic residues-rich tracts occupy residues Met1–Trp10 and Met30–Lys41. The disordered stretch occupies residues Met1–Ala44. Over Met1–Arg72 the chain is Cytoplasmic. Residues Ser73–Ala93 traverse the membrane as a helical segment. Topologically, residues Gln94–Met324 are extracellular. Residues Asn150 and Asn177 are each glycosylated (N-linked (GlcNAc...) asparagine). Cys180 and Cys193 are disulfide-bonded. Residues Ile325–Ile345 form a helical membrane-spanning segment. Over Gly346 to Gln355 the chain is Cytoplasmic. Residues Phe356–Val376 form a helical membrane-spanning segment. Asn377 carries an N-linked (GlcNAc...) asparagine glycan. The Extracellular portion of the chain corresponds to Asn377 to Tyr409. Residues Leu410 to Val430 form a helical membrane-spanning segment. Residues Asn431–Asp447 lie on the Cytoplasmic side of the membrane. Residues Ile448–Leu468 form a helical membrane-spanning segment. Over Cys469–Asn482 the chain is Extracellular. Residues Ser483–Phe497 constitute an intramembrane region (pore-forming). Residues Ser498–Ala510 are Extracellular-facing. Residues Phe511–Ile531 form a helical membrane-spanning segment. The Cytoplasmic segment spans residues Asn532–Glu716. Phosphoserine; by CK2 is present on Ser534. The stretch at Glu613–Asp680 forms a coiled coil. Residues Arg696–Glu716 form a disordered region.

It belongs to the polycystin family. Post-translationally, phosphorylated. CK2 (kin-3 and kin-10) and calcineurin act antagonistically to regulate the phosphorylation state. As to expression, exclusively expressed in a subset of 3 categories of adult male sensory neurons: ray neurons, hook neurons and head cephalic (CEM) neurons. Expressed in the male tail.

Its subcellular location is the cell membrane. The protein localises to the cell projection. The protein resides in the cilium membrane. It localises to the cilium. It is found in the axon. Its subcellular location is the dendrite. The protein localises to the perikaryon. The protein resides in the endoplasmic reticulum membrane. Functionally, functions as a calcium permeable cation channel. Required for 2 aspects of male mating behavior: response to hermaphrodite contact and vulva location. Acts in the same pathway as lov-1 and atp-2 in response behavior. The chain is Polycystin-2 from Caenorhabditis elegans.